Consider the following 122-residue polypeptide: MTSKVVFLLLLSLVVVLLPLYASAAARVGGWSPISNVTDPQVVEIGEFAVSEYNKRSESGLKFETVVSGETQVVSGTNYRLKVAANDGDGVSKNYLAIVWDKPWMKFRNLTSFEPANNGRFL.

The signal sequence occupies residues methionine 1–alanine 26. The region spanning glycine 29 to asparagine 117 is the Cystatin domain. Asparagine 36 is a glycosylation site (N-linked (GlcNAc...) asparagine). A Secondary area of contact motif is present at residues glutamine 72 to glycine 76. A glycan (N-linked (GlcNAc...) asparagine) is linked at asparagine 109.

This sequence belongs to the cystatin family. Phytocystatin subfamily.

Its subcellular location is the secreted. Specific inhibitor of cysteine proteinases. Probably involved in the regulation of endogenous processes and in defense against pests and pathogens. The protein is Cysteine proteinase inhibitor 5 (CYS5) of Arabidopsis thaliana (Mouse-ear cress).